Here is a 210-residue protein sequence, read N- to C-terminus: Nta operon transcriptional regulator (210 aa).

In terms of domain architecture, HTH gntR-type spans 1–55 (MAVSYHFRPGERINEVELAAQLKVSRTPLREALNRLTTEGFLTTTANKGFFARVL). The H-T-H motif DNA-binding region spans 15–34 (EVELAAQLKVSRTPLREALN).

Functionally, probable regulator for the expression of the NTA monooxygenase subunits. The sequence is that of Nta operon transcriptional regulator (ntaR) from Aminobacter aminovorans (Chelatobacter heintzii).